A 295-amino-acid chain; its full sequence is uncharacterized protein (295 aa).

Over residues 57-67 (RKLLVKQKRKS) the composition is skewed to basic residues. The tract at residues 57–94 (RKLLVKQKRKSNKEFQSNIIKKRKDEERKGTLKTEQAN) is disordered. The segment covering 79–88 (RKDEERKGTL) has biased composition (basic and acidic residues). Coiled-coil stretches lie at residues 87-116 (TLKTEQANEEELLQRSRLELERKAKKYDQY) and 259-286 (DVLTLRDKKLEERRKFLERDYAIKLGER).

Its subcellular location is the nucleus. This is an uncharacterized protein from Schizosaccharomyces pombe (strain 972 / ATCC 24843) (Fission yeast).